Consider the following 185-residue polypeptide: Large ribosomal subunit protein uL6m (185 aa).

Belongs to the universal ribosomal protein uL6 family.

The protein localises to the mitochondrion. The protein is Large ribosomal subunit protein uL6m (RPL6) of Reclinomonas americana.